We begin with the raw amino-acid sequence, 207 residues long: Dephospho-CoA kinase (207 aa).

One can recognise a DPCK domain in the interval 10–207 (ILGLTGGIGS…FYLTLSGGQS (198 aa)). 18–23 (GSGKSA) lines the ATP pocket.

The protein belongs to the CoaE family.

The protein localises to the cytoplasm. It carries out the reaction 3'-dephospho-CoA + ATP = ADP + CoA + H(+). It functions in the pathway cofactor biosynthesis; coenzyme A biosynthesis; CoA from (R)-pantothenate: step 5/5. In terms of biological role, catalyzes the phosphorylation of the 3'-hydroxyl group of dephosphocoenzyme A to form coenzyme A. In Pseudomonas fluorescens (strain Pf0-1), this protein is Dephospho-CoA kinase.